Consider the following 55-residue polypeptide: Large ribosomal subunit protein bL33 (55 aa).

It belongs to the bacterial ribosomal protein bL33 family.

The chain is Large ribosomal subunit protein bL33 from Dehalococcoides mccartyi (strain ATCC BAA-2266 / KCTC 15142 / 195) (Dehalococcoides ethenogenes (strain 195)).